The following is a 204-amino-acid chain: RNA-free ribonuclease P (204 aa).

Belongs to the HARP family.

The enzyme catalyses Endonucleolytic cleavage of RNA, removing 5'-extranucleotides from tRNA precursor.. RNA-free RNase P that catalyzes the removal of the 5'-leader sequence from pre-tRNA to produce the mature 5'-terminus. This chain is RNA-free ribonuclease P, found in Pyrococcus horikoshii (strain ATCC 700860 / DSM 12428 / JCM 9974 / NBRC 100139 / OT-3).